A 248-amino-acid polypeptide reads, in one-letter code: Probable transcriptional regulatory protein Acid345_2125 (248 aa).

The protein belongs to the TACO1 family.

It is found in the cytoplasm. In Koribacter versatilis (strain Ellin345), this protein is Probable transcriptional regulatory protein Acid345_2125.